The primary structure comprises 685 residues: Threonine--tRNA ligase (685 aa).

The TGS domain maps to 1–65; the sequence is MSTPASAAPA…DTDVEVEPVA (65 aa). The tract at residues 262-568 is catalytic; it reads DHRKLGSELD…LTEHYAGAFP (307 aa). Zn(2+) contacts are provided by C367, H418, and H545.

This sequence belongs to the class-II aminoacyl-tRNA synthetase family. As to quaternary structure, homodimer. It depends on Zn(2+) as a cofactor.

It is found in the cytoplasm. The catalysed reaction is tRNA(Thr) + L-threonine + ATP = L-threonyl-tRNA(Thr) + AMP + diphosphate + H(+). Its function is as follows. Catalyzes the attachment of threonine to tRNA(Thr) in a two-step reaction: L-threonine is first activated by ATP to form Thr-AMP and then transferred to the acceptor end of tRNA(Thr). Also edits incorrectly charged L-seryl-tRNA(Thr). The protein is Threonine--tRNA ligase of Rhodococcus jostii (strain RHA1).